A 38-amino-acid chain; its full sequence is Large ribosomal subunit protein bL36 (38 aa).

Belongs to the bacterial ribosomal protein bL36 family.

The sequence is that of Large ribosomal subunit protein bL36 from Baumannia cicadellinicola subsp. Homalodisca coagulata.